The primary structure comprises 303 residues: 1D-myo-inositol 2-acetamido-2-deoxy-alpha-D-glucopyranoside deacetylase (303 aa).

The Zn(2+) site is built by H13, D16, and H147.

This sequence belongs to the MshB deacetylase family. Requires Zn(2+) as cofactor.

It carries out the reaction 1D-myo-inositol 2-acetamido-2-deoxy-alpha-D-glucopyranoside + H2O = 1D-myo-inositol 2-amino-2-deoxy-alpha-D-glucopyranoside + acetate. Its function is as follows. Catalyzes the deacetylation of 1D-myo-inositol 2-acetamido-2-deoxy-alpha-D-glucopyranoside (GlcNAc-Ins) in the mycothiol biosynthesis pathway. In Mycobacterium tuberculosis (strain ATCC 25177 / H37Ra), this protein is 1D-myo-inositol 2-acetamido-2-deoxy-alpha-D-glucopyranoside deacetylase.